Here is a 461-residue protein sequence, read N- to C-terminus: Nucleobindin-1 (461 aa).

The first 26 residues, 1–26 (MPPSGPRGTLLLLPLLLLLLLRAVLA), serve as a signal peptide directing secretion. An O-glycosylated at one site region spans residues 42-51 (TESPDTGLYY). At Ser86 the chain carries Phosphoserine; by FAM20C. At Thr148 the chain carries Phosphothreonine; by FAM20C. Positions 150–218 (EARDLELLIQ…QQRRHREHPK (69 aa)) form a coiled coil. The DNA-binding element occupies 172 to 218 (HHEEFKRYEMLKEHERRRYLESLGEEQRKEAERKLEEQQRRHREHPK). A compositionally biased stretch (basic and acidic residues) spans 193-210 (SLGEEQRKEAERKLEEQQ). Positions 193–221 (SLGEEQRKEAERKLEEQQRRHREHPKVNV) are disordered. The segment at 228–321 (LKEVWEELDG…VTLEEFLAST (94 aa)) is binds to GNAI2 and GNAI3. EF-hand domains lie at 240-275 (PNRF…ELEK) and 292-327 (ERLR…KEFG). Ca(2+) contacts are provided by Asp253, Asn255, Asp257, Glu264, Asp305, Asn307, Asp309, and Glu316. The GBA motif lies at 303-333 (NVDTNQDRLVTLEEFLASTQRKEFGDTGEGW). Positions 341–407 (AYTEEELRRF…QRKQQQQQQQ (67 aa)) form a coiled coil. A disordered region spans residues 368–461 (LSQETEALGR…LPEVEVPQHL (94 aa)). A Phosphoserine; by FAM20C modification is found at Ser369. Over residues 437-461 (DQKEVDTSEKKLLERLPEVEVPQHL) the composition is skewed to basic and acidic residues.

The protein belongs to the nucleobindin family. In terms of assembly, interacts (via GBA motif) with guanine nucleotide-binding protein G(i) alpha subunits GNAI1, GNAI2 and GNAI3 with higher affinity for GNAI1 and GNAI3 than for GNAI2. Preferentially interacts with inactive rather than active GNAI3. Interaction with GNAI3 is inhibited when NUCB1 binds calcium, probably due to a conformational change which renders the GBA motif inaccessible. Post-translationally, O-glycosylated. In terms of tissue distribution, expressed both in fetal and adult heart, lung, liver, kidney and brain, and in adult skeletal muscle, placenta and pancreas.

Its subcellular location is the golgi apparatus. The protein localises to the cis-Golgi network membrane. The protein resides in the cytoplasm. It localises to the secreted. Its function is as follows. Major calcium-binding protein of the Golgi which may have a role in calcium homeostasis. Acts as a non-receptor guanine nucleotide exchange factor which binds to and activates alpha subunits of guanine nucleotide-binding proteins (G proteins). This Homo sapiens (Human) protein is Nucleobindin-1 (NUCB1).